Consider the following 392-residue polypeptide: Formate-dependent phosphoribosylglycinamide formyltransferase (392 aa).

Residues 22–23 and Glu82 each bind N(1)-(5-phospho-beta-D-ribosyl)glycinamide; that span reads EL. ATP-binding positions include Arg114, Lys155, 160–165, 195–198, and Glu203; these read SSGKGQ and EGVV. The 190-residue stretch at 119–308 folds into the ATP-grasp domain; it reads RLAAEELGLP…EFALHVRAFL (190 aa). Mg(2+) is bound by residues Glu267 and Glu279. Residues Asp286, Lys355, and 362–363 each bind N(1)-(5-phospho-beta-D-ribosyl)glycinamide; that span reads RR.

It belongs to the PurK/PurT family. In terms of assembly, homodimer.

The catalysed reaction is N(1)-(5-phospho-beta-D-ribosyl)glycinamide + formate + ATP = N(2)-formyl-N(1)-(5-phospho-beta-D-ribosyl)glycinamide + ADP + phosphate + H(+). The protein operates within purine metabolism; IMP biosynthesis via de novo pathway; N(2)-formyl-N(1)-(5-phospho-D-ribosyl)glycinamide from N(1)-(5-phospho-D-ribosyl)glycinamide (formate route): step 1/1. Functionally, involved in the de novo purine biosynthesis. Catalyzes the transfer of formate to 5-phospho-ribosyl-glycinamide (GAR), producing 5-phospho-ribosyl-N-formylglycinamide (FGAR). Formate is provided by PurU via hydrolysis of 10-formyl-tetrahydrofolate. The polypeptide is Formate-dependent phosphoribosylglycinamide formyltransferase (Salmonella schwarzengrund (strain CVM19633)).